Reading from the N-terminus, the 494-residue chain is MDLRVGRKFRIGRKIGSGSFGDIYHGTNLISGEEVAIKLESIRSRHPQLDYESRVYRYLSGGVGIPFIRWFGREGEYNAMVIDLLGPSLEDLFNYCHRRFSFKTVIMLALQMFCRIQYIHGRSFIHRDIKPDNFLMGVGRRGSTVHVIDFGLSKKYRDFNTHRHIPYRENKSLTGTARYASVNTHLGIEQSRRDDLESLGYVLIYFCKGSLPWQGLKATTKKQKYDRIMEKKLNVSVETLCSGLPLEFQEYMAYCKNLKFDEKPDYLFLARLFKDLSIKLEYHNDHLFDWTMLRYTKAMVEKQRDLLIEKGDLNANSNAASASNSTDNKSETFNKIKLLAMKKFPTHFHYYKNEDKHNPSPEEIKQQTILNNNAASSLPEELLNALDKGMENLRQQQPQQQVQSSQPQPQPQQLQQQPNGQRPNYYPEPLLQQQQRDSQEQQQQVPMATTRATQYPPQINSNNFNTNQASVPPQMRSNPQQPPQDKPAGQSIWL.

One can recognise a Protein kinase domain in the interval 9 to 278 (FRIGRKIGSG…LARLFKDLSI (270 aa)). ATP contacts are provided by residues 15–23 (IGSGSFGDI) and Lys-38. Asp-128 acts as the Proton acceptor in catalysis. A Phosphoserine modification is found at Ser-143. The tract at residues 394-494 (RQQQPQQQVQ…DKPAGQSIWL (101 aa)) is disordered. Composition is skewed to low complexity over residues 395 to 418 (QQQPQQQVQSSQPQPQPQQLQQQP) and 432 to 444 (QQQQRDSQEQQQQ). Over residues 445–479 (VPMATTRATQYPPQINSNNFNTNQASVPPQMRSNP) the composition is skewed to polar residues.

This sequence belongs to the protein kinase superfamily. CK1 Ser/Thr protein kinase family. Casein kinase I subfamily. In terms of assembly, interacts with HRI1. Interacts with ELP1/IKI3; the interaction leads to ELP1/IKI3 phosphorylation.

Its subcellular location is the cytoplasm. It localises to the nucleus. It is found in the nucleolus. The protein resides in the nucleoplasm. The enzyme catalyses L-seryl-[protein] + ATP = O-phospho-L-seryl-[protein] + ADP + H(+). It carries out the reaction L-threonyl-[protein] + ATP = O-phospho-L-threonyl-[protein] + ADP + H(+). Functionally, protein kinase which phosphorylates serine and threonine residues. Can use casein as a substrate. Phosphorylates elongator complex member ELP1/IKI3 on 'Ser-1198' and 'Ser-1202' which promotes the tRNA modification function of the complex. Associated with repair of damaged DNA and meiosis. The sequence is that of Casein kinase I homolog HRR25 (HRR25) from Saccharomyces cerevisiae (strain ATCC 204508 / S288c) (Baker's yeast).